A 214-amino-acid polypeptide reads, in one-letter code: Adenylate kinase (214 aa).

An ATP-binding site is contributed by 10–15 (GAGKGT). Residues 30–59 (STGDMLRAAVKAGTPLGLEAKKVMDAGQLV) form an NMP region. AMP contacts are provided by residues Thr31, Arg36, 57–59 (QLV), 85–88 (GFPR), and Gln92. The tract at residues 122–159 (GRRVHPGSGRVYHIVFNQPKVEGKDDVTGEDLAIRPDD) is LID. Residues Arg123 and 132–133 (VY) contribute to the ATP site. Positions 156 and 167 each coordinate AMP. Residue Gln200 participates in ATP binding.

Belongs to the adenylate kinase family. In terms of assembly, monomer.

The protein localises to the cytoplasm. The enzyme catalyses AMP + ATP = 2 ADP. It participates in purine metabolism; AMP biosynthesis via salvage pathway; AMP from ADP: step 1/1. In terms of biological role, catalyzes the reversible transfer of the terminal phosphate group between ATP and AMP. Plays an important role in cellular energy homeostasis and in adenine nucleotide metabolism. The polypeptide is Adenylate kinase (Shewanella piezotolerans (strain WP3 / JCM 13877)).